The primary structure comprises 234 residues: Orotate phosphoribosyltransferase (234 aa).

Lys-30 contacts 5-phospho-alpha-D-ribose 1-diphosphate. Position 38–39 (38–39 (FF)) interacts with orotate. 5-phospho-alpha-D-ribose 1-diphosphate-binding positions include 80-81 (YK), Arg-110, Lys-111, Lys-114, His-116, and 136-144 (DDVITAGTA). Orotate contacts are provided by Thr-140 and Arg-168.

The protein belongs to the purine/pyrimidine phosphoribosyltransferase family. PyrE subfamily. Homodimer.

The catalysed reaction is orotidine 5'-phosphate + diphosphate = orotate + 5-phospho-alpha-D-ribose 1-diphosphate. It functions in the pathway pyrimidine metabolism; UMP biosynthesis via de novo pathway; UMP from orotate: step 1/2. Catalyzes the transfer of a ribosyl phosphate group from 5-phosphoribose 1-diphosphate to orotate, leading to the formation of orotidine monophosphate (OMP). The protein is Orotate phosphoribosyltransferase (URA5) of Metarhizium anisopliae (Entomophthora anisopliae).